The following is a 514-amino-acid chain: 2,3-bisphosphoglycerate-independent phosphoglycerate mutase (514 aa).

Residues aspartate 13 and serine 63 each coordinate Mn(2+). Catalysis depends on serine 63, which acts as the Phosphoserine intermediate. Residues histidine 124, 154 to 155 (RD), arginine 186, arginine 192, 258 to 261 (RADR), and lysine 332 contribute to the substrate site. Mn(2+) is bound by residues aspartate 399, histidine 403, aspartate 440, histidine 441, and histidine 459.

This sequence belongs to the BPG-independent phosphoglycerate mutase family. In terms of assembly, monomer. The cofactor is Mn(2+).

It catalyses the reaction (2R)-2-phosphoglycerate = (2R)-3-phosphoglycerate. The protein operates within carbohydrate degradation; glycolysis; pyruvate from D-glyceraldehyde 3-phosphate: step 3/5. In terms of biological role, catalyzes the interconversion of 2-phosphoglycerate and 3-phosphoglycerate. This chain is 2,3-bisphosphoglycerate-independent phosphoglycerate mutase, found in Legionella pneumophila (strain Paris).